Consider the following 105-residue polypeptide: Serine protease inhibitor Kazal-type 6 (105 aa).

The signal sequence occupies residues 1-23 (MKVAGVFLLLSLALLCFFSGAFS). Residue Q24 is modified to Pyrrolidone carboxylic acid. A Kazal-like domain is found at 49-105 (RLFQINCGEFRDPKVFCTRESDPLCGSDGQTYGNKCAFCKALEKSSGKINLKHRGKC). 3 disulfide bridges follow: C55-C87, C65-C84, and C73-C105.

As to expression, expressed in the upper epidermis and in skin appendages.

It localises to the secreted. Functionally, serine protease inhibitor selective for kallikreins. Efficiently inhibits KLK5 and human KLK2, KLK4, KLK5, KLK6, KLK7, KLK12, KLK13 and KLK14. Doesn't inhibit human KLK1 and KLK8. The polypeptide is Serine protease inhibitor Kazal-type 6 (Spink6) (Mus musculus (Mouse)).